Reading from the N-terminus, the 1470-residue chain is Roundabout homolog 2 (1470 aa).

A signal peptide spans 1–21 (MNPLMFTLLLLFGFLCIQIDG). Residues 22–863 (SRLRQEDFPP…EQITDVVKQP (842 aa)) are Extracellular-facing. Ig-like C2-type domains are found at residues 31–127 (PRIV…ASLE), 133–220 (DDFR…AELT), 225–309 (PTFL…ATLT), 318–413 (PQFV…LEVT), and 422–508 (PIIL…AVLD). An intrachain disulfide couples Cys52 to Cys110. Asn123 carries an N-linked (GlcNAc...) asparagine glycan. Intrachain disulfides connect Cys154–Cys203, Cys246–Cys293, and Cys339–Cys395. A glycan (N-linked (GlcNAc...) asparagine) is linked at Asn430. A disulfide bridge connects residues Cys443 and Cys492. Fibronectin type-III domains are found at residues 528–622 (PPSK…TQDI), 641–739 (VVVR…TEEA), and 743–840 (PPQS…IGGR). 4 N-linked (GlcNAc...) asparagine glycosylation sites follow: Asn756, Asn786, Asn793, and Asn849. A helical membrane pass occupies residues 864–884 (AFIAGIGGACWVILMGFSIWL). Over 885–1470 (YWRRKKRKGL…GSNSQGQFTE (586 aa)) the chain is Cytoplasmic. 4 disordered regions span residues 1036–1089 (GFGY…LPGT), 1129–1159 (EDRV…LTPS), 1190–1371 (IQSN…DCPA), and 1383–1470 (DWIN…QFTE). The span at 1144-1158 (PAISFGQQSTATLTP) shows a compositional bias: polar residues. A Phosphothreonine modification is found at Thr1157. The residue at position 1159 (Ser1159) is a Phosphoserine. Over residues 1194-1203 (TPPPQPPAPP) the composition is skewed to pro residues. Residues 1215-1231 (LETDVPDEDADDEEEPL) are compositionally biased toward acidic residues. A compositionally biased stretch (polar residues) spans 1243–1288 (TPGSSMDNLDSSVTGKAFSSSQRQRPTSPFSTDSNTSAAQNQSQRP). Positions 1315–1325 (DLPPPPDPPPG) are enriched in pro residues. Residues 1328–1343 (LRQQIGLSQHSGNVEN) show a composition bias toward polar residues. Residues 1413–1437 (SKPSFPSPGGHSSSGTSSSKGSTGP) show a composition bias toward low complexity. Residues 1461–1470 (GSNSQGQFTE) are compositionally biased toward polar residues.

Belongs to the immunoglobulin superfamily. ROBO family. Interacts with SLIT2. Expressed in embryonal spinal cord.

The protein localises to the membrane. Functionally, receptor for SLIT2, and probably SLIT1, which are thought to act as molecular guidance cue in cellular migration, including axonal navigation at the ventral midline of the neural tube and projection of axons to different regions during neuronal development. In Mus musculus (Mouse), this protein is Roundabout homolog 2 (Robo2).